We begin with the raw amino-acid sequence, 258 residues long: Transcription factor RSL3 (258 aa).

The D-box signature appears at 98–105; sequence RKLLDVEN. The segment at 119–178 is disordered; sequence ELAKSKKKQRVSSESNTVDESNTNWVDGQSLSNSSDDEKASVTSVKGKTRATKGTATDPQ. The segment covering 130–152 has biased composition (polar residues); the sequence is SSESNTVDESNTNWVDGQSLSNS. The interval 173–186 is basic motif; sequence TATDPQSLYARKRR. The bHLH domain occupies 173-222; it reads TATDPQSLYARKRREKINERLKTLQNLVPNGTKVDISTMLEEAVHYVKFL. Residues 187-222 form a helix-loop-helix motif region; sequence EKINERLKTLQNLVPNGTKVDISTMLEEAVHYVKFL.

Homodimer. Ubiquitinated. Ubiquitination leads to its subsequent degradation by the 26S proteasome. As to expression, expressed constitutively in roots, leaves, and flowers. Expressed in root epidermal hair cells.

The protein resides in the nucleus. In terms of biological role, transcription factor involved in the regulation of root hair elongation. Is sufficient to promote postmitotic cell growth in root-hair cells and is a direct transcriptional target of RHD6 and RSL1. Involved in the regulation of root hair elongation in response to low phosphate. Controls root hair cell growth by regulating the expression of genes encoding proteins involved in cell signaling, cell wall modification and secretion. This Arabidopsis thaliana (Mouse-ear cress) protein is Transcription factor RSL3.